We begin with the raw amino-acid sequence, 202 residues long: UPF0126 membrane protein YvgT (202 aa).

6 helical membrane-spanning segments follow: residues 3 to 23 (WELL…IVAM), 26 to 46 (EYDI…GGAI), 63 to 83 (AYFQ…KLLL), 90 to 110 (GNLS…LYAV), 113 to 133 (GHPL…GGII), and 160 to 180 (IVGL…FVLV).

This sequence belongs to the UPF0126 family.

Its subcellular location is the cell membrane. This is UPF0126 membrane protein YvgT (yvgT) from Bacillus subtilis (strain 168).